We begin with the raw amino-acid sequence, 157 residues long: Baculoviral IAP repeat-containing protein 5.2-A (157 aa).

Residues 31 to 101 (RLRTFSNWPF…KHSPSCLFIA (71 aa)) form a BIR repeat. Threonine 47 bears the Phosphothreonine; by CDK1 mark. Residues cysteine 70, cysteine 73, histidine 90, and cysteine 97 each contribute to the Zn(2+) site.

The protein belongs to the IAP family. Component of the CPC at least composed of survivin/birc5, incenp, cdca8/borealin and/or cdca9/dasra-A, and aurkb/aurora-B. Interacts directly with incenp (via N-terminus). Interacts with rxra; the interaction is stronger in the absence of 9-cis retinoic acids. Post-translationally, ubiquitination is required for centrosome-targeting. In terms of tissue distribution, highly expressed in vascular endothelial cells of tadpoles.

Its subcellular location is the cytoplasm. The protein localises to the nucleus. The protein resides in the chromosome. It is found in the centromere. It localises to the cytoskeleton. Its subcellular location is the spindle. In terms of biological role, component of the chromosomal passenger complex (CPC), a complex that acts as a key regulator of mitosis. The CPC complex has essential functions at the centromere in ensuring correct chromosome alignment and segregation and is required for chromatin-induced microtubule stabilization and spindle assembly. Does not appear to exhibit anti-apoptotic activity. Plays a role in increasing blood vessel size during development. The protein is Baculoviral IAP repeat-containing protein 5.2-A (birc5.2-a) of Xenopus laevis (African clawed frog).